The primary structure comprises 115 residues: U17-barytoxin-Tl1c (115 aa).

The first 20 residues, 1–20 (MKTIIVFLSLLVLATKFGDA), serve as a signal peptide directing secretion. A propeptide spanning residues 21-74 (KEGVNQKQKKEVTQNEFREEYLNEMAAMSLVQQLEAIERALFENEAGRNSRQKR) is cleaved from the precursor. 3 disulfides stabilise this stretch: Cys-75–Cys-89, Cys-82–Cys-94, and Cys-88–Cys-109.

Belongs to the neurotoxin 14 (magi-1) family. 03 (ICK-30-40) subfamily. In terms of tissue distribution, expressed by the venom gland.

Its subcellular location is the secreted. Functionally, ion channel inhibitor. This is U17-barytoxin-Tl1c from Trittame loki (Brush-footed trapdoor spider).